An 88-amino-acid chain; its full sequence is Small ribosomal subunit protein uS17 (88 aa).

The protein belongs to the universal ribosomal protein uS17 family. In terms of assembly, part of the 30S ribosomal subunit.

One of the primary rRNA binding proteins, it binds specifically to the 5'-end of 16S ribosomal RNA. The protein is Small ribosomal subunit protein uS17 of Pseudomonas savastanoi pv. phaseolicola (strain 1448A / Race 6) (Pseudomonas syringae pv. phaseolicola (strain 1448A / Race 6)).